The sequence spans 299 residues: Ig alpha chain C region (299 aa).

2 consecutive Ig-like domains span residues 71–167 (PSLS…ATIS) and 174–276 (PQVH…KTID).

Ig alpha is the major immunoglobulin class in body secretions. It may serve both to defend against local infection and to prevent access of foreign antigens to the general immunologic system. The polypeptide is Ig alpha chain C region (Oryctolagus cuniculus (Rabbit)).